Here is a 253-residue protein sequence, read N- to C-terminus: Phycoerythrobilin:ferredoxin oxidoreductase (253 aa).

It belongs to the HY2 family.

It catalyses the reaction (3Z)-phycoerythrobilin + oxidized 2[4Fe-4S]-[ferredoxin] = 15,16-dihydrobiliverdin + reduced 2[4Fe-4S]-[ferredoxin] + 2 H(+). Catalyzes the two-electron reduction of the C2 and C3(1) diene system of 15,16-dihydrobiliverdin. The protein is Phycoerythrobilin:ferredoxin oxidoreductase of Prochlorococcus marinus (strain MIT 9312).